Consider the following 196-residue polypeptide: MVVAQAGAPAHPPAAHGAEAGHGEAAGGEHGGFPPFKPQHFASQLIWLIVSFGALYFLMSRVTLPRIGRILEERHDRIAKDLEEARLRQAESEAAQAAYEKALTEARGKANAIAGEARARLAAETDANRKSLEENLNAKLADAERRIASTKATALSHVRGIAVDTTGAIVTALVGTPAGNQDVESAVDAALAAKSA.

A compositionally biased stretch (low complexity) spans 1–18 (MVVAQAGAPAHPPAAHGA). A disordered region spans residues 1–33 (MVVAQAGAPAHPPAAHGAEAGHGEAAGGEHGGF). The chain crosses the membrane as a helical span at residues 41-60 (FASQLIWLIVSFGALYFLMS).

It belongs to the ATPase B chain family. F-type ATPases have 2 components, F(1) - the catalytic core - and F(0) - the membrane proton channel. F(1) has five subunits: alpha(3), beta(3), gamma(1), delta(1), epsilon(1). F(0) has three main subunits: a(1), b(2) and c(10-14). The alpha and beta chains form an alternating ring which encloses part of the gamma chain. F(1) is attached to F(0) by a central stalk formed by the gamma and epsilon chains, while a peripheral stalk is formed by the delta and b chains.

It is found in the cell inner membrane. Functionally, f(1)F(0) ATP synthase produces ATP from ADP in the presence of a proton or sodium gradient. F-type ATPases consist of two structural domains, F(1) containing the extramembraneous catalytic core and F(0) containing the membrane proton channel, linked together by a central stalk and a peripheral stalk. During catalysis, ATP synthesis in the catalytic domain of F(1) is coupled via a rotary mechanism of the central stalk subunits to proton translocation. Component of the F(0) channel, it forms part of the peripheral stalk, linking F(1) to F(0). The b'-subunit is a diverged and duplicated form of b found in plants and photosynthetic bacteria. The polypeptide is ATP synthase subunit b 2 (atpF2) (Azorhizobium caulinodans (strain ATCC 43989 / DSM 5975 / JCM 20966 / LMG 6465 / NBRC 14845 / NCIMB 13405 / ORS 571)).